The primary structure comprises 156 residues: Cyclic pyranopterin monophosphate synthase (156 aa).

Substrate contacts are provided by residues 75–77 (LCH) and 111–112 (ME). Aspartate 126 is an active-site residue.

Belongs to the MoaC family. Homohexamer; trimer of dimers.

It carries out the reaction (8S)-3',8-cyclo-7,8-dihydroguanosine 5'-triphosphate = cyclic pyranopterin phosphate + diphosphate. It functions in the pathway cofactor biosynthesis; molybdopterin biosynthesis. Functionally, catalyzes the conversion of (8S)-3',8-cyclo-7,8-dihydroguanosine 5'-triphosphate to cyclic pyranopterin monophosphate (cPMP). This Caulobacter sp. (strain K31) protein is Cyclic pyranopterin monophosphate synthase.